The chain runs to 171 residues: UPF0312 protein SAOUHSC_03022 (171 aa).

It belongs to the UPF0312 family.

The chain is UPF0312 protein SAOUHSC_03022 from Staphylococcus aureus (strain NCTC 8325 / PS 47).